A 542-amino-acid polypeptide reads, in one-letter code: Signal peptide peptidase-like 5 (542 aa).

The first 23 residues, 1-23 (MAAATAAVFALLMASALAGAAAG), serve as a signal peptide directing secretion. Topologically, residues 24 to 192 (GDIVHHDDEA…PDRPVVDTAE (169 aa)) are lumenal. N-linked (GlcNAc...) asparagine glycosylation is found at asparagine 79 and asparagine 145. The PA domain maps to 92–167 (CTSPKEKVSG…LPRDAGFALH (76 aa)). A helical membrane pass occupies residues 193-213 (VFLWLMAVGTVLCASYWSAWS). Residues 214-245 (AREALCEQEKLLKDGREVLLNVENGSSSGMID) are Cytoplasmic-facing. The chain crosses the membrane as a helical span at residues 246–266 (INVASAIMFVVVASCFLIMLY). Over 267 to 275 (KMMSSWFVE) the chain is Lumenal. The helical transmembrane segment at 276 to 296 (LLVVIFCVGGVEGLQTCLVAL) threads the bilayer. At 297–316 (LSRWFRAASESFFKVPFFGA) the chain is on the cytoplasmic side. The helical transmembrane segment at 317–337 (VSYLTLAVSPFCIVFAVLWAV) threads the bilayer. Residues 338 to 342 (HRHFT) are Lumenal-facing. The helical transmembrane segment at 343 to 363 (YAWIGQDILGIALIITVIQIV) threads the bilayer. Residues 364–367 (RVPN) are Cytoplasmic-facing. Residues 368-388 (LKVGSVLLSCAFFYDIFWVFV) form a helical membrane-spanning segment. The active site involves aspartate 382. The Lumenal segment spans residues 389–426 (SKRWFHESVMIVVARGDKTDEDGVPMLLKIPRMFDPWG). Residues 427–447 (GYSIIGFGDILLPGLLVAFAL) traverse the membrane as a helical segment. Aspartate 435 is an active-site residue. Over 448-459 (RYDWAAKKSLQT) the chain is Cytoplasmic. The helical transmembrane segment at 460 to 480 (GYFLWSMVAYGSGLLITYVAL) threads the bilayer. Residues 481–486 (NLMDGH) are Lumenal-facing. A helical transmembrane segment spans residues 487-507 (GQPALLYIVPFTLGALISLGW). The short motif at 489–491 (PAL) is the PAL element. Residues 508 to 542 (KRGELWNLWSKGEPERVCPHHMHMQPQPKTPPLVQ) lie on the Cytoplasmic side of the membrane.

The protein belongs to the peptidase A22B family. Post-translationally, glycosylated.

It localises to the endosome membrane. Its function is as follows. Intramembrane-cleaving aspartic protease (I-CLiP) that cleaves type II membrane signal peptides in the hydrophobic plane of the membrane. This chain is Signal peptide peptidase-like 5 (SPPL5), found in Oryza sativa subsp. japonica (Rice).